Here is a 268-residue protein sequence, read N- to C-terminus: DNA repair protein RecO (268 aa).

It belongs to the RecO family.

Functionally, involved in DNA repair and RecF pathway recombination. In Parasynechococcus marenigrum (strain WH8102), this protein is DNA repair protein RecO.